The primary structure comprises 168 residues: uncharacterized protein (168 aa).

2 4Fe-4S ferredoxin-type domains span residues lysine 48–isoleucine 78 and lysine 91–isoleucine 122. The [4Fe-4S] cluster site is built by cysteine 58, cysteine 61, cysteine 64, cysteine 68, cysteine 100, cysteine 103, cysteine 106, and cysteine 110.

This is an uncharacterized protein from Methanocaldococcus jannaschii (strain ATCC 43067 / DSM 2661 / JAL-1 / JCM 10045 / NBRC 100440) (Methanococcus jannaschii).